A 290-amino-acid polypeptide reads, in one-letter code: Protein translocase subunit SecF (290 aa).

A run of 6 helical transmembrane segments spans residues 15-35 (VFMI…FTKG), 131-151 (KAIL…TVRF), 156-176 (AISA…IFAI), 184-204 (SFIA…IIVF), 234-256 (TLYT…GVVL), and 260-282 (ILAI…SAIL).

The protein belongs to the SecD/SecF family. SecF subfamily. As to quaternary structure, forms a complex with SecD. Part of the essential Sec protein translocation apparatus which comprises SecA, SecYEG and auxiliary proteins SecDF. Other proteins may also be involved.

The protein resides in the cell inner membrane. Its function is as follows. Part of the Sec protein translocase complex. Interacts with the SecYEG preprotein conducting channel. SecDF uses the proton motive force (PMF) to complete protein translocation after the ATP-dependent function of SecA. The protein is Protein translocase subunit SecF of Dictyoglomus turgidum (strain DSM 6724 / Z-1310).